Consider the following 338-residue polypeptide: D-erythrose-4-phosphate dehydrogenase (338 aa).

Position 12 to 13 (12 to 13) interacts with NAD(+); it reads RI. Residues 154–156, R200, 213–214, and R236 each bind substrate; these read SCT and TK. C155 functions as the Nucleophile in the catalytic mechanism. N318 is an NAD(+) binding site.

It belongs to the glyceraldehyde-3-phosphate dehydrogenase family. Epd subfamily. As to quaternary structure, homotetramer.

The protein resides in the cytoplasm. It catalyses the reaction D-erythrose 4-phosphate + NAD(+) + H2O = 4-phospho-D-erythronate + NADH + 2 H(+). The protein operates within cofactor biosynthesis; pyridoxine 5'-phosphate biosynthesis; pyridoxine 5'-phosphate from D-erythrose 4-phosphate: step 1/5. Its function is as follows. Catalyzes the NAD-dependent conversion of D-erythrose 4-phosphate to 4-phosphoerythronate. The chain is D-erythrose-4-phosphate dehydrogenase from Yersinia enterocolitica serotype O:8 / biotype 1B (strain NCTC 13174 / 8081).